Reading from the N-terminus, the 835-residue chain is Protein translocase subunit SecA (835 aa).

Residues glutamine 85, 103–107 (GEGKT), and aspartate 495 contribute to the ATP site. The interval 806-835 (KVFLNNDSSDDESSKKRRTRKVRTSKKPWN) is disordered. The segment covering 820 to 835 (KKRRTRKVRTSKKPWN) has biased composition (basic residues).

Belongs to the SecA family. As to quaternary structure, monomer and homodimer. Part of the essential Sec protein translocation apparatus which comprises SecA, SecYEG and auxiliary proteins SecDF. Other proteins may also be involved.

Its subcellular location is the cell membrane. It is found in the cytoplasm. It carries out the reaction ATP + H2O + cellular proteinSide 1 = ADP + phosphate + cellular proteinSide 2.. Part of the Sec protein translocase complex. Interacts with the SecYEG preprotein conducting channel. Has a central role in coupling the hydrolysis of ATP to the transfer of proteins into and across the cell membrane, serving as an ATP-driven molecular motor driving the stepwise translocation of polypeptide chains across the membrane. This Onion yellows phytoplasma (strain OY-M) protein is Protein translocase subunit SecA.